The primary structure comprises 133 residues: Osteocrin (133 aa).

The N-terminal stretch at 1–27 is a signal peptide; it reads MLDWRLASAHFILAVTLTLWSSGKVLS. Residue arginine 132 is modified to Arginine amide.

This sequence belongs to the Osteocrin family. Interacts with NPR3. As to expression, enriched in neocortical regions of the developing cerebral cortex. Not expressed in other compartments of the neocortical wall or in brain regions such as the hippocampus, striatum, mediodorsal nucleus of the thalamus and cerebellum. Also expressed in bone. In developing neonatal rib bone, present at high level in osteoblasts on bone-forming surfaces, in newly incorporated osteocytes and in some late hypertrophic chondrocytes (at protein level). In adult bone, localizes specifically to osteoblasts and young osteocytes at bone-forming sites (at protein level).

Its subcellular location is the secreted. In terms of biological role, hormone that acts as a regulator of dendritic growth in the developing cerebral cortex in response to sensory experience. Induced in the brain following membrane depolarization and inhibits dendritic branching in neurons of the developing cortex. Probably acts by binding to natriuretic peptide receptor NPR3/NPR-C, thereby preventing binding between NPR3/NPR-C and natriuretic peptides, leading to increase cGMP production. In Homo sapiens (Human), this protein is Osteocrin.